The following is a 153-amino-acid chain: Endoribonuclease YbeY (153 aa).

Zn(2+) is bound by residues His-118, His-122, and His-128.

The protein belongs to the endoribonuclease YbeY family. It depends on Zn(2+) as a cofactor.

It is found in the cytoplasm. Its function is as follows. Single strand-specific metallo-endoribonuclease involved in late-stage 70S ribosome quality control and in maturation of the 3' terminus of the 16S rRNA. This is Endoribonuclease YbeY from Staphylococcus carnosus (strain TM300).